Consider the following 124-residue polypeptide: Putative membrane protein insertion efficiency factor (124 aa).

The segment at 1-24 (MHDPHGHAHTVRPPGRGRNWPGPW) is disordered. The span at 12–24 (RPPGRGRNWPGPW) shows a compositional bias: low complexity.

The protein belongs to the UPF0161 family.

Its subcellular location is the cell inner membrane. Could be involved in insertion of integral membrane proteins into the membrane. The sequence is that of Putative membrane protein insertion efficiency factor from Mesorhizobium japonicum (strain LMG 29417 / CECT 9101 / MAFF 303099) (Mesorhizobium loti (strain MAFF 303099)).